The following is a 512-amino-acid chain: Na(+)/H(+) antiporter NhaB (512 aa).

The next 11 membrane-spanning stretches (helical) occupy residues 28–48, 52–72, 97–117, 144–164, 201–221, 237–257, 296–330, 347–367, 390–410, 446–466, and 474–494; these read FLII…WLLV, IFTL…LLAI, LLLM…LFIF, FLDA…FYGI, LMMH…VGEP, FFLR…LTCF, LALI…IILA, TEAL…AVII, LFYL…VGSV, ATPN…APLI, and VWMA…CVKF.

Belongs to the NhaB Na(+)/H(+) (TC 2.A.34) antiporter family.

The protein resides in the cell inner membrane. It catalyses the reaction 2 Na(+)(in) + 3 H(+)(out) = 2 Na(+)(out) + 3 H(+)(in). Functionally, na(+)/H(+) antiporter that extrudes sodium in exchange for external protons. The polypeptide is Na(+)/H(+) antiporter NhaB (Enterobacter sp. (strain 638)).